A 154-amino-acid chain; its full sequence is 3-hydroxyacyl-[acyl-carrier-protein] dehydratase FabZ (154 aa).

His57 is a catalytic residue.

This sequence belongs to the thioester dehydratase family. FabZ subfamily.

It is found in the cytoplasm. The catalysed reaction is a (3R)-hydroxyacyl-[ACP] = a (2E)-enoyl-[ACP] + H2O. Its function is as follows. Involved in unsaturated fatty acids biosynthesis. Catalyzes the dehydration of short chain beta-hydroxyacyl-ACPs and long chain saturated and unsaturated beta-hydroxyacyl-ACPs. The sequence is that of 3-hydroxyacyl-[acyl-carrier-protein] dehydratase FabZ from Sinorhizobium fredii (strain NBRC 101917 / NGR234).